We begin with the raw amino-acid sequence, 292 residues long: Putative OX-2 membrane glycoprotein homolog (292 aa).

The signal sequence occupies residues 1–18; the sequence is MSPLMLRLLPLLCIIISA. Residues 24-136 enclose the Ig-like V-type domain; the sequence is PETSPSLVYE…TFTVDNEKTS (113 aa). The cysteines at positions 42 and 126 are disulfide-linked. Residues Asn45, Asn57, Asn72, and Asn195 are each glycosylated (N-linked (GlcNAc...) asparagine; by host). An Ig-like C2-type domain is found at 147–237; it reads PIVVLYFRYL…TNQKASALVT (91 aa). Residues 263-283 traverse the membrane as a helical segment; it reads VFTWIVPLILILIISVMVLLI.

It localises to the host membrane. The protein is Putative OX-2 membrane glycoprotein homolog (U85) of Human herpesvirus 6B (strain Z29) (HHV-6 variant B).